A 406-amino-acid chain; its full sequence is Phloroisovalerophenone synthase (406 aa).

Cysteine 171 is a catalytic residue.

Belongs to the thiolase-like superfamily. Chalcone/stilbene synthases family.

It carries out the reaction 3-methylbutanoyl-CoA + 3 malonyl-CoA + 3 H(+) = phlorisovalerophenone + 3 CO2 + 4 CoA. In terms of biological role, produces 3-methyl-1-(2,4,6-trihydroxyphenyl)butan-1-one (phloroisovalerophenone). The chain is Phloroisovalerophenone synthase (VPS) from Psilotum nudum (Whisk fern).